A 278-amino-acid chain; its full sequence is Soluble NSF attachment protein homolog FPV011 (278 aa).

Belongs to the SNAP family.

The polypeptide is Soluble NSF attachment protein homolog FPV011 (Fowlpox virus (strain NVSL) (FPV)).